Reading from the N-terminus, the 539-residue chain is Transcription factor LG2 (539 aa).

Positions 115-125 (MRQQQQLHSGN) are enriched in polar residues. Disordered stretches follow at residues 115-140 (MRQQ…SAQN) and 181-246 (KPGL…KSRL). Composition is skewed to low complexity over residues 126-137 (SQSVGSTTDSSS) and 192-205 (QQQH…QQQL). Positions 219-242 (TRKDGKSVDAKTERRLAQNREAAR) are enriched in basic and acidic residues. Positions 227-271 (DAKTERRLAQNREAARKSRLRKKAYVQNLETSRVRLQQIEQELQR) constitute a bZIP domain. Residues 229-249 (KTERRLAQNREAARKSRLRKK) form a basic motif region. Residues 255–269 (LETSRVRLQQIEQEL) form a leucine-zipper region. The region spanning 292–506 (AAMFDMEYAR…RALSNLWSSR (215 aa)) is the DOG1 domain. Positions 513-539 (GTESVSPTGTELQPMHNQPQQNQYSGF) are disordered.

The protein belongs to the bZIP family. As to quaternary structure, interacts with NPR1/NH1 and NPR3/NH3.

The protein localises to the nucleus. Transcriptional regulator involved in defense response. Acts as a transcriptional activator in vitro. The sequence is that of Transcription factor LG2 from Oryza sativa subsp. japonica (Rice).